Reading from the N-terminus, the 241-residue chain is Small ribosomal subunit protein uS2 (241 aa).

This sequence belongs to the universal ribosomal protein uS2 family.

The sequence is that of Small ribosomal subunit protein uS2 from Erwinia tasmaniensis (strain DSM 17950 / CFBP 7177 / CIP 109463 / NCPPB 4357 / Et1/99).